A 478-amino-acid polypeptide reads, in one-letter code: Ribulose bisphosphate carboxylase large chain (478 aa).

A propeptide spanning residues 1 to 2 is cleaved from the precursor; sequence MS. An N-acetylproline modification is found at Pro3. Position 14 is an N6,N6,N6-trimethyllysine (Lys14). Substrate contacts are provided by Asn123 and Thr173. Lys175 functions as the Proton acceptor in the catalytic mechanism. Position 177 (Lys177) interacts with substrate. The Mg(2+) site is built by Lys201, Asp203, and Glu204. Lys201 carries the post-translational modification N6-carboxylysine. Catalysis depends on His294, which acts as the Proton acceptor. Residues Arg295, His327, and Ser379 each contribute to the substrate site.

It belongs to the RuBisCO large chain family. Type I subfamily. As to quaternary structure, heterohexadecamer of 8 large chains and 8 small chains; disulfide-linked. The disulfide link is formed within the large subunit homodimers. Mg(2+) is required as a cofactor. The disulfide bond which can form in the large chain dimeric partners within the hexadecamer appears to be associated with oxidative stress and protein turnover.

It is found in the plastid. The protein localises to the chloroplast. It carries out the reaction 2 (2R)-3-phosphoglycerate + 2 H(+) = D-ribulose 1,5-bisphosphate + CO2 + H2O. The catalysed reaction is D-ribulose 1,5-bisphosphate + O2 = 2-phosphoglycolate + (2R)-3-phosphoglycerate + 2 H(+). RuBisCO catalyzes two reactions: the carboxylation of D-ribulose 1,5-bisphosphate, the primary event in carbon dioxide fixation, as well as the oxidative fragmentation of the pentose substrate in the photorespiration process. Both reactions occur simultaneously and in competition at the same active site. This chain is Ribulose bisphosphate carboxylase large chain, found in Neurachne tenuifolia.